A 688-amino-acid polypeptide reads, in one-letter code: Complement C1s subcomponent (688 aa).

Residues 1-15 (MWCIVLFSLLAWVYA) form the signal peptide. The CUB 1 domain occupies 16–130 (EPTMYGEILS…TGFAAYYVAT (115 aa)). Ca(2+) contacts are provided by E60, D68, D113, D131, I132, and E134. An intrachain disulfide couples C65 to C83. The region spanning 131-172 (DINECTDFVDVPCSHFCNNFIGGYFCSCPPEYFLHDDMKNCG) is the EGF-like; calcium-binding domain. 3 cysteine pairs are disulfide-bonded: C135-C147, C143-C156, and C158-C171. Residues N149, F150, and G153 each contribute to the Ca(2+) site. Residue N149 is modified to (3R)-3-hydroxyasparagine. N174 carries N-linked (GlcNAc...) asparagine glycosylation. A disulfide bond links C175 and C202. The CUB 2 domain occupies 175–290 (CSGDVFTALI…KGWKLRYHGD (116 aa)). The Ca(2+) site is built by E226, D236, D275, G278, and Q279. C234 and C251 are joined by a disulfide. Sushi domains are found at residues 292–356 (MPCP…KCQP) and 357–423 (VDCG…KCVP). 7 disulfides stabilise this stretch: C294-C341, C321-C354, C359-C403, C386-C421, C425-C549, C595-C618, and C628-C659. An N-linked (GlcNAc...) asparagine glycan is attached at N406. The Peptidase S1 domain maps to 438–680 (IIGGSDADIK…YVDWIMKTMQ (243 aa)). Catalysis depends on charge relay system residues H475 and D529. S632 serves as the catalytic Charge relay system.

Belongs to the peptidase S1 family. In terms of assembly, core component of the complement C1 complex, a calcium-dependent complex composed of 1 molecule of the C1Q subcomplex, 2 molecules of C1R and 2 molecules of C1S. The C1Q subcomplex is composed 18 subunits: 3 chains of C1QA, C1QB, and C1QC trimerize to form 6 collagen-like triple helices connected to six globular ligand-recognition modules. Cleaved and activated by C1R to generate Complement C1s subcomponent heavy and light chains. Post-translationally, the iron and 2-oxoglutarate dependent 3-hydroxylation of aspartate and asparagine is (R) stereospecific within EGF domains.

The protein localises to the secreted. Its subcellular location is the cell surface. The enzyme catalyses Cleavage of Arg-|-Ala bond in complement component C4 to form C4a and C4b, and Lys(or Arg)-|-Lys bond in complement component C2 to form C2a and C2b: the 'classical' pathway C3 convertase.. Its activity is regulated as follows. Cleaved and activated by C1R. Immunoglobulin-binding promotes autoactivation of C1R, which results in the cleavage of the Arg-Ile bond in the catalytic domain. Inhibited by C1 inhibitor (SERPING1). Its function is as follows. Component of the complement C1 complex, a multiprotein complex that initiates the classical pathway of the complement system, a cascade of proteins that leads to phagocytosis and breakdown of pathogens and signaling that strengthens the adaptive immune system. C1S is activated following association of the C1 complex with immunoglobulins (IgG or IgM) complexed with antigens to form antigen-antibody complexes on the surface of pathogens. C1S is cleaved and activated by C1R to generate C1s subcomponent heavy and light chains. C1s subcomponent light chain then cleaves and activates C2 and C4, the next components of the classical complement pathway. Serine protease component of the complement C1 complex, which catalyzes cleavage and activation of C2 and C4, the next components of the classical complement pathway. Also able to cleave C1 inhibitor (SERPING1) in vitro; additional evidence is however required to confirm this result in vivo. Also cleaves IGFBP5 and thereby inhibits the trophic effects of IGF1. The protein is Complement C1s subcomponent of Homo sapiens (Human).